We begin with the raw amino-acid sequence, 320 residues long: Pyrroline-5-carboxylate reductase 2 (320 aa).

An N-acetylserine modification is found at S2. Residues 6–11 (IGAGQL) and S34 each bind NADP(+). NADPH-binding residues include A8, Q10, L11, S34, E36, N56, V70, K71, and A97. NADP(+)-binding positions include N56, 69–72 (AVKP), and 95–97 (CAA). E164 is a binding site for L-proline. Position 230 (N230) interacts with NADPH. L-proline-binding residues include A237 and T238. The disordered stretch occupies residues 293–320 (ESPTVSTLAPPSSGKLLTRNPAQGSKRE). A Phosphoserine modification is found at S304.

This sequence belongs to the pyrroline-5-carboxylate reductase family. In terms of assembly, homodecamer; composed of 5 homodimers. Interacts with LTO1.

It localises to the cytoplasm. Its subcellular location is the mitochondrion. It catalyses the reaction L-proline + NADP(+) = (S)-1-pyrroline-5-carboxylate + NADPH + 2 H(+). The enzyme catalyses L-proline + NAD(+) = (S)-1-pyrroline-5-carboxylate + NADH + 2 H(+). It functions in the pathway amino-acid biosynthesis; L-proline biosynthesis; L-proline from L-glutamate 5-semialdehyde: step 1/1. Functionally, oxidoreductase that catalyzes the last step in proline biosynthesis, which corresponds to the reduction of pyrroline-5-carboxylate to L-proline using NAD(P)H. At physiologic concentrations, has higher specific activity in the presence of NADH. Involved in cellular response to oxidative stress. In some cell types, such as erythrocytes, its primary function may be the generation of NADP(+). The sequence is that of Pyrroline-5-carboxylate reductase 2 from Rattus norvegicus (Rat).